The following is a 137-amino-acid chain: uncharacterized protein (137 aa).

The first 34 residues, 1–34 (MAALSRALGPLRTPAPPLWIGLFLVATGSQQSLA), serve as a signal peptide directing secretion. The span at 33-45 (LAQPLPGNTTEAT) shows a compositional bias: polar residues. Disordered regions lie at residues 33 to 54 (LAQP…ASGS) and 98 to 137 (VLSP…LGAS). Asparagine 40 carries an N-linked (GlcNAc...) asparagine glycan. Basic and acidic residues predominate over residues 121-137 (KLKEPQPQDHKPGLGAS).

The protein localises to the secreted. This is an uncharacterized protein from Homo sapiens (Human).